The following is a 1104-amino-acid chain: Receptor-type guanylate cyclase gcy-15 (1104 aa).

Topologically, residues 1-431 are extracellular; that stretch reads MEIAINRLNA…ENCGPPANNT (431 aa). N-linked (GlcNAc...) asparagine glycans are attached at residues Asn-43, Asn-237, Asn-263, Asn-287, Asn-407, and Asn-429. A helical transmembrane segment spans residues 432-452; sequence FIIVISVGVAVLIGLAIAAAF. Over 453 to 1104 the chain is Cytoplasmic; the sequence is LYKRYRYERR…QIQEKTYEFS (652 aa). Residues 528 to 823 enclose the Protein kinase domain; sequence FNTGSTARAG…QIKRKLKPLT (296 aa). ATP is bound by residues 534 to 542 and Lys-576; that span reads ARAGPFGPI. Residues 838 to 871 adopt a coiled-coil conformation; it reads IEKYTDKLEKDIAERNEELEAEKAKSEALLKMML. The 131-residue stretch at 894–1024 folds into the Guanylate cyclase domain; it reads TVFFSDCPGF…DTVNTASRME (131 aa).

Belongs to the adenylyl cyclase class-4/guanylyl cyclase family. Expressed bilaterally in ASG sensory neurons.

Its subcellular location is the cell membrane. The catalysed reaction is GTP = 3',5'-cyclic GMP + diphosphate. Functionally, guanylate cyclase involved in the production of the second messenger cGMP. This Caenorhabditis elegans protein is Receptor-type guanylate cyclase gcy-15.